Reading from the N-terminus, the 298-residue chain is N-acetylmuramic acid 6-phosphate etherase (298 aa).

Residues 55-218 (IHAQVSGGGR…STGLMIKSGK (164 aa)) form the SIS domain. The Proton donor role is filled by glutamate 83. Glutamate 114 is a catalytic residue.

The protein belongs to the GCKR-like family. MurNAc-6-P etherase subfamily. Homodimer.

The enzyme catalyses N-acetyl-D-muramate 6-phosphate + H2O = N-acetyl-D-glucosamine 6-phosphate + (R)-lactate. It participates in amino-sugar metabolism; 1,6-anhydro-N-acetylmuramate degradation. It functions in the pathway amino-sugar metabolism; N-acetylmuramate degradation. Its pathway is cell wall biogenesis; peptidoglycan recycling. Functionally, specifically catalyzes the cleavage of the D-lactyl ether substituent of MurNAc 6-phosphate, producing GlcNAc 6-phosphate and D-lactate. Together with AnmK, is also required for the utilization of anhydro-N-acetylmuramic acid (anhMurNAc) either imported from the medium or derived from its own cell wall murein, and thus plays a role in cell wall recycling. The chain is N-acetylmuramic acid 6-phosphate etherase from Shigella boydii serotype 18 (strain CDC 3083-94 / BS512).